Reading from the N-terminus, the 121-residue chain is Small ribosomal subunit protein uS13 (121 aa).

A disordered region spans residues 91-121 (HRMSLPVRGQRTRTNARTRRGSRKTVAGRKK). Over residues 100 to 121 (QRTRTNARTRRGSRKTVAGRKK) the composition is skewed to basic residues.

The protein belongs to the universal ribosomal protein uS13 family. In terms of assembly, part of the 30S ribosomal subunit. Forms a loose heterodimer with protein S19. Forms two bridges to the 50S subunit in the 70S ribosome.

In terms of biological role, located at the top of the head of the 30S subunit, it contacts several helices of the 16S rRNA. In the 70S ribosome it contacts the 23S rRNA (bridge B1a) and protein L5 of the 50S subunit (bridge B1b), connecting the 2 subunits; these bridges are implicated in subunit movement. Contacts the tRNAs in the A and P-sites. The chain is Small ribosomal subunit protein uS13 from Prochlorococcus marinus (strain MIT 9312).